Here is a 194-residue protein sequence, read N- to C-terminus: Protein GrpE (194 aa).

Residues 1–44 (MAEEKQNEELNEQEELNETEAETAEAEQTAAEADAPAEETQTEM) form a disordered region. Over residues 9–25 (ELNEQEELNETEAETAE) the composition is skewed to acidic residues.

The protein belongs to the GrpE family. As to quaternary structure, homodimer.

Its subcellular location is the cytoplasm. Its function is as follows. Participates actively in the response to hyperosmotic and heat shock by preventing the aggregation of stress-denatured proteins, in association with DnaK and GrpE. It is the nucleotide exchange factor for DnaK and may function as a thermosensor. Unfolded proteins bind initially to DnaJ; upon interaction with the DnaJ-bound protein, DnaK hydrolyzes its bound ATP, resulting in the formation of a stable complex. GrpE releases ADP from DnaK; ATP binding to DnaK triggers the release of the substrate protein, thus completing the reaction cycle. Several rounds of ATP-dependent interactions between DnaJ, DnaK and GrpE are required for fully efficient folding. This Bacillus licheniformis (strain ATCC 14580 / DSM 13 / JCM 2505 / CCUG 7422 / NBRC 12200 / NCIMB 9375 / NCTC 10341 / NRRL NRS-1264 / Gibson 46) protein is Protein GrpE.